Reading from the N-terminus, the 207-residue chain is Methylated-DNA--protein-cysteine methyltransferase (207 aa).

DNA-binding residues include Y123 and R137. The Nucleophile; methyl group acceptor role is filled by C154. S160 contacts DNA.

The protein belongs to the MGMT family.

It is found in the nucleus. The catalysed reaction is a 6-O-methyl-2'-deoxyguanosine in DNA + L-cysteinyl-[protein] = S-methyl-L-cysteinyl-[protein] + a 2'-deoxyguanosine in DNA. The enzyme catalyses a 4-O-methyl-thymidine in DNA + L-cysteinyl-[protein] = a thymidine in DNA + S-methyl-L-cysteinyl-[protein]. Functionally, involved in the cellular defense against the biological effects of O6-methylguanine (O6-MeG) and O4-methylthymine (O4-MeT) in DNA. Repairs the methylated nucleobase in DNA by stoichiometrically transferring the methyl group to a cysteine residue in the enzyme. This is a suicide reaction: the enzyme is irreversibly inactivated. In Candida glabrata (strain ATCC 2001 / BCRC 20586 / JCM 3761 / NBRC 0622 / NRRL Y-65 / CBS 138) (Yeast), this protein is Methylated-DNA--protein-cysteine methyltransferase (MGT1).